The chain runs to 105 residues: uncharacterized protein (105 aa).

It belongs to the baculoviridae 11 kDa protein family.

This is an uncharacterized protein from Autographa californica nuclear polyhedrosis virus (AcMNPV).